We begin with the raw amino-acid sequence, 161 residues long: Small ribosomal subunit protein bS6 (161 aa).

A disordered region spans residues 107–161; the sequence is KGDERERGFRGPKPAGRFESGRGGAGGARRGYDDREEFRARNEREDGRDTDGEAE. Positions 136-161 are enriched in basic and acidic residues; that stretch reads RGYDDREEFRARNEREDGRDTDGEAE.

Belongs to the bacterial ribosomal protein bS6 family.

Functionally, binds together with bS18 to 16S ribosomal RNA. The chain is Small ribosomal subunit protein bS6 from Gluconacetobacter diazotrophicus (strain ATCC 49037 / DSM 5601 / CCUG 37298 / CIP 103539 / LMG 7603 / PAl5).